We begin with the raw amino-acid sequence, 410 residues long: MSDIKKAVLAYSGGLDTSVILKWLQDTYGCEIVTFTADLGQGEELEPARAKALQFGIKPENIFIDDLREEFVRDFVFPMFRANTIYEGEYLLGTSIARPLIAKRQIEIARLTGADAVSHGATGKGNDQVRFELGYYALEPGIKVIAPWREWDLLSREKLMAYAEKHGIPVEMKHKQGGSPYSMDANLLHISYEGRHLENPNAEAEESMWRWTVSPEKAPDAPEIIEIEFRAGDPVAIDGKAYKPHELLAELNRIGGKHGIGRLDLVENRFVGMKSRGCYETPGGTILLKAHRGIESITLDREVAHLKDDLMPRYASLIYNGLWWAPERLALQTLIDHTQQAVNGVVRLKLYKGSVSVISRDSANTLFDQNIATFDDDGGAYNQADAGGFIKLNALRMRIAETAKRKRAQK.

Residues 10 to 18 and Ala37 contribute to the ATP site; that span reads AYSGGLDTS. Residues Tyr90 and Ser95 each coordinate L-citrulline. Gly120 contributes to the ATP binding site. Positions 122, 126, and 127 each coordinate L-aspartate. Residue Asn126 coordinates L-citrulline. L-citrulline is bound by residues Arg130, Ser182, Ser191, Glu267, and Tyr279.

The protein belongs to the argininosuccinate synthase family. Type 1 subfamily. Homotetramer.

It is found in the cytoplasm. The enzyme catalyses L-citrulline + L-aspartate + ATP = 2-(N(omega)-L-arginino)succinate + AMP + diphosphate + H(+). It functions in the pathway amino-acid biosynthesis; L-arginine biosynthesis; L-arginine from L-ornithine and carbamoyl phosphate: step 2/3. The chain is Argininosuccinate synthase from Polynucleobacter asymbioticus (strain DSM 18221 / CIP 109841 / QLW-P1DMWA-1) (Polynucleobacter necessarius subsp. asymbioticus).